A 66-amino-acid polypeptide reads, in one-letter code: Large ribosomal subunit protein bL35 (66 aa).

Over residues 1–26 (MPKMKTHRGSAKRFKKTGSGKLKRSH) the composition is skewed to basic residues. The interval 1 to 48 (MPKMKTHRGSAKRFKKTGSGKLKRSHAYTSHLFANKSQKQKRKLRKSA) is disordered.

This sequence belongs to the bacterial ribosomal protein bL35 family.

The protein is Large ribosomal subunit protein bL35 of Bacillus licheniformis (strain ATCC 14580 / DSM 13 / JCM 2505 / CCUG 7422 / NBRC 12200 / NCIMB 9375 / NCTC 10341 / NRRL NRS-1264 / Gibson 46).